Consider the following 168-residue polypeptide: Ribosome-binding factor A (168 aa).

The span at 125-138 (RVREGAKHAGDSDP) shows a compositional bias: basic and acidic residues. A disordered region spans residues 125 to 168 (RVREGAKHAGDSDPYRVLGEGDLEGPATGGPDVEDEGGANSHDR).

Belongs to the RbfA family. Monomer. Binds 30S ribosomal subunits, but not 50S ribosomal subunits or 70S ribosomes.

It is found in the cytoplasm. One of several proteins that assist in the late maturation steps of the functional core of the 30S ribosomal subunit. Associates with free 30S ribosomal subunits (but not with 30S subunits that are part of 70S ribosomes or polysomes). Required for efficient processing of 16S rRNA. May interact with the 5'-terminal helix region of 16S rRNA. This Mycolicibacterium gilvum (strain PYR-GCK) (Mycobacterium gilvum (strain PYR-GCK)) protein is Ribosome-binding factor A.